We begin with the raw amino-acid sequence, 197 residues long: Chalcone--flavanone isomerase 2 (197 aa).

Residues threonine 23, asparagine 88, and threonine 165 each coordinate substrate.

It belongs to the chalcone isomerase family.

The enzyme catalyses a chalcone = a flavanone.. The protein operates within secondary metabolite biosynthesis; flavonoid biosynthesis. Catalyzes the intramolecular cyclization of bicyclic chalcones into tricyclic (S)-flavanones. Responsible for the isomerization of 4,2',4',6'-tetrahydroxychalcone (also termed chalcone) into naringenin. This is Chalcone--flavanone isomerase 2 (CHI2) from Medicago sativa (Alfalfa).